Consider the following 418-residue polypeptide: Probable carboxypeptidase AFLA_000940 (418 aa).

Residues 1 to 18 form the signal peptide; the sequence is MKATDLFHVTVLVAGALA. Asn-74 carries N-linked (GlcNAc...) asparagine glycosylation. Asp-147 is a binding site for Zn(2+). Asn-168 carries an N-linked (GlcNAc...) asparagine glycan. The active-site Proton acceptor is Glu-179. Glu-180 contributes to the Zn(2+) binding site.

It belongs to the peptidase M20A family. Zn(2+) is required as a cofactor.

It localises to the secreted. The protein is Probable carboxypeptidase AFLA_000940 of Aspergillus flavus (strain ATCC 200026 / FGSC A1120 / IAM 13836 / NRRL 3357 / JCM 12722 / SRRC 167).